Here is a 295-residue protein sequence, read N- to C-terminus: Formamidopyrimidine-DNA glycosylase (295 aa).

Pro2 functions as the Schiff-base intermediate with DNA in the catalytic mechanism. The Proton donor role is filled by Glu3. Lys61 serves as the catalytic Proton donor; for beta-elimination activity. DNA-binding residues include His95, Arg117, and Arg159. The FPG-type zinc-finger motif lies at 245-279 (HAYGREGEACERCGTPIRRVAFMNRSSYFCPVCQP). Arg269 (proton donor; for delta-elimination activity) is an active-site residue.

It belongs to the FPG family. Monomer. The cofactor is Zn(2+).

It carries out the reaction Hydrolysis of DNA containing ring-opened 7-methylguanine residues, releasing 2,6-diamino-4-hydroxy-5-(N-methyl)formamidopyrimidine.. The catalysed reaction is 2'-deoxyribonucleotide-(2'-deoxyribose 5'-phosphate)-2'-deoxyribonucleotide-DNA = a 3'-end 2'-deoxyribonucleotide-(2,3-dehydro-2,3-deoxyribose 5'-phosphate)-DNA + a 5'-end 5'-phospho-2'-deoxyribonucleoside-DNA + H(+). Functionally, involved in base excision repair of DNA damaged by oxidation or by mutagenic agents. Acts as a DNA glycosylase that recognizes and removes damaged bases. Has a preference for oxidized purines, such as 7,8-dihydro-8-oxoguanine (8-oxoG). Has AP (apurinic/apyrimidinic) lyase activity and introduces nicks in the DNA strand. Cleaves the DNA backbone by beta-delta elimination to generate a single-strand break at the site of the removed base with both 3'- and 5'-phosphates. The polypeptide is Formamidopyrimidine-DNA glycosylase (Nocardioides sp. (strain ATCC BAA-499 / JS614)).